The sequence spans 76 residues: uncharacterized protein (76 aa).

This is an uncharacterized protein from Enterobacteria phage T4 (Bacteriophage T4).